Here is a 610-residue protein sequence, read N- to C-terminus: UvrABC system protein C (610 aa).

The region spanning 16–94 (SQPGVYRMYD…IKLYQPRYNV (79 aa)) is the GIY-YIG domain. In terms of domain architecture, UVR spans 204–239 (DQVLTQLIARMEKASQDLAFEEAARIRDQIQAVRRV).

This sequence belongs to the UvrC family. As to quaternary structure, interacts with UvrB in an incision complex.

It localises to the cytoplasm. Functionally, the UvrABC repair system catalyzes the recognition and processing of DNA lesions. UvrC both incises the 5' and 3' sides of the lesion. The N-terminal half is responsible for the 3' incision and the C-terminal half is responsible for the 5' incision. The polypeptide is UvrABC system protein C (Salmonella agona (strain SL483)).